Reading from the N-terminus, the 242-residue chain is Protein fmp-52, mitochondrial (242 aa).

The transit peptide at 1 to 87 (MSTSTPTSTA…VISSLGTTRV (87 aa)) directs the protein to the mitochondrion. The tract at residues 33 to 58 (SSQVQTISRRAPANPTNSSRLSPTVN) is disordered. A compositionally biased stretch (polar residues) spans 35-58 (QVQTISRRAPANPTNSSRLSPTVN).

The protein belongs to the FMP52 family.

It is found in the mitochondrion outer membrane. This is Protein fmp-52, mitochondrial (fmp-52) from Neurospora crassa (strain ATCC 24698 / 74-OR23-1A / CBS 708.71 / DSM 1257 / FGSC 987).